Here is a 351-residue protein sequence, read N- to C-terminus: Peptide chain release factor 1 (351 aa).

Q230 is subject to N5-methylglutamine.

The protein belongs to the prokaryotic/mitochondrial release factor family. Post-translationally, methylated by PrmC. Methylation increases the termination efficiency of RF1.

It is found in the cytoplasm. In terms of biological role, peptide chain release factor 1 directs the termination of translation in response to the peptide chain termination codons UAG and UAA. In Onion yellows phytoplasma (strain OY-M), this protein is Peptide chain release factor 1.